A 126-amino-acid polypeptide reads, in one-letter code: Flagellar protein FliT (126 aa).

Positions 1-50 (MVSPHRLLKDYQQLLSLSQKILHLAISGQWDTLVEQEIVYVQSVEGLVNT) are required for homodimerization. Positions 60-98 (MRLHLRQILQEVMDNEAKVKQLLQKRMDELSSLMGQSLK) are fliD binding.

This sequence belongs to the FliT family. As to quaternary structure, homodimer. Interacts with FliD and FlhC.

Its subcellular location is the cytoplasm. The protein localises to the cytosol. Functionally, dual-function protein that regulates the transcription of class 2 flagellar operons and that also acts as an export chaperone for the filament-capping protein FliD. As a transcriptional regulator, acts as an anti-FlhDC factor; it directly binds FlhC, thus inhibiting the binding of the FlhC/FlhD complex to class 2 promoters, resulting in decreased expression of class 2 flagellar operons. As a chaperone, effects FliD transition to the membrane by preventing its premature polymerization, and by directing it to the export apparatus. This chain is Flagellar protein FliT, found in Pectobacterium atrosepticum (strain SCRI 1043 / ATCC BAA-672) (Erwinia carotovora subsp. atroseptica).